Reading from the N-terminus, the 412-residue chain is MGLKLSRGPVKEKSPLEFTRVHILTYFTTNSYLRNLVSKKRRRLIIGGYDLDMSYISDKLLAMSFPAERMRAVYRNPLWQVKSVLDMRHPDHYKVYNLCIEESYDPDNFYGRVERFPFDDNHVPSLKMIQLFCESVHSWLSLDPKNIAVVHCMAGKGRTGLMVSAYLVYGGMSAEEALEMYASRRTTNNNGVSIPSQRRYVKYWSDLLSFSKKGPPEVKLPQEHSRELLRIRLYDTANVDSVFFVVSELQEVPNEMYRPSVELARGCCRQFKKGYCRSSSPRYYISHVNCDSEEDEEVTDGEEPHLVVQMDTESSIIDEKTCLDFYFDKPVRVSGDIRITFYQKMIGSRLFYTCFNTAFITNGLLQFSIGELDKVGGNGRSISGPDFSLELLFGPACSKFGKFLSRDDLSLS.

The 170-residue stretch at 42–211 (RRLIIGGYDL…KYWSDLLSFS (170 aa)) folds into the Phosphatase tensin-type domain. Catalysis depends on cysteine 152, which acts as the Phosphocysteine intermediate. In terms of domain architecture, C2 tensin-type spans 239–396 (VDSVFFVVSE…FSLELLFGPA (158 aa)).

It belongs to the PTEN phosphatase protein family. As to expression, expressed exclusively in pollen grains during the late stage of development (at protein level).

It carries out the reaction O-phospho-L-tyrosyl-[protein] + H2O = L-tyrosyl-[protein] + phosphate. The enzyme catalyses a 1,2-diacyl-sn-glycero-3-phospho-(1D-myo-inositol-3,4,5-trisphosphate) + H2O = a 1,2-diacyl-sn-glycero-3-phospho-(1D-myo-inositol-4,5-bisphosphate) + phosphate. Inhibited by vanadate. In terms of biological role, protein tyrosine phosphatase that also exhibits lipid phosphatase activity. Can use phosphatidylinositol substrates such as PtdIns(3,4,5)P(3) as substrate. Pollen-specific phosphatase required for pollen development. This chain is Phosphatidylinositol 3,4,5-trisphosphate 3-phosphatase and protein-tyrosine-phosphatase PTEN1, found in Arabidopsis thaliana (Mouse-ear cress).